Consider the following 225-residue polypeptide: Membrane protein (225 aa).

At 1-20 (MSNETNCTLDFEQSVELFKE) the chain is on the virion surface side. Residues 21-41 (YNLFITAFLLFLTIILQYGYA) traverse the membrane as a helical segment. The Intravirion segment spans residues 42–51 (TRIRFIYILK). The helical transmembrane segment at 52–72 (MIVLWCFWPLNIAVGVISCIY) threads the bilayer. Topologically, residues 73 to 77 (PPNTG) are virion surface. Residues 78-98 (GLVAAIILTVFACLSFVGYWI) traverse the membrane as a helical segment. Residues 99–225 (QSCRLFKRCR…VATGGSSLYT (127 aa)) lie on the Intravirion side of the membrane.

The protein belongs to the gammacoronaviruses M protein family. In terms of assembly, homomultimer. Interacts with envelope E protein in the budding compartment of the host cell, which is located between endoplasmic reticulum and the Golgi complex. Forms a complex with HE and S proteins. Interacts with nucleocapsid N protein. This interaction probably participates in RNA packaging into the virus.

The protein resides in the virion membrane. It is found in the host Golgi apparatus membrane. Component of the viral envelope that plays a central role in virus morphogenesis and assembly via its interactions with other viral proteins. The polypeptide is Membrane protein (Avian infectious bronchitis virus (strain KB8523) (IBV)).